We begin with the raw amino-acid sequence, 347 residues long: Protein RecA (347 aa).

Residue 67–74 (GPESSGKT) participates in ATP binding.

It belongs to the RecA family. The protein migrates as a 40 kDa protein in strains 69A and NCTC 11637. When overexpressed in E.coli a 38 kDa protein is made which is unable to complement the E.coli deletion mutant. It has been suggested this size difference is due to a post-translational modification.

It localises to the cytoplasm. Functionally, can catalyze the hydrolysis of ATP in the presence of single-stranded DNA, the ATP-dependent uptake of single-stranded DNA by duplex DNA, and the ATP-dependent hybridization of homologous single-stranded DNAs. It interacts with LexA causing its activation and leading to its autocatalytic cleavage. Its function is as follows. Deletion of this gene leads to the inability of the bacteria to perform homologous recombination, and markedly increases UV sensitivity. The chain is Protein RecA from Helicobacter pylori (strain ATCC 700392 / 26695) (Campylobacter pylori).